Reading from the N-terminus, the 308-residue chain is MKITPIAFESLGVRSQATLIETKDLRVLVDPAISLAPRRYNLPPHQREVDRLTELAKVLVDVAKDVDVIIVSHYHYDHHDPGYVIPTDIYKNKLVFIKDPQNMINNSQKYRRAPRFLRSIKDKPSKIEIADGKTFEVGHTTISFSPAVPHGADERLGYVIQVAISDKDSTVIFTSDIEGAPKDVHLKFTKEKMPKTIIIDGPLSYLLGRVLKEEELEKSIRNMEEIVKNGLETVIIDHHVLRDINYAEVLKPVYDIAKDLGVRVTTAAEYLNLEPLILEARRKELFKEDNRPAKIPRGLANLLSAGEG.

It belongs to the UPF0282 family.

This is UPF0282 protein M164_2122 from Saccharolobus islandicus (strain M.16.4 / Kamchatka #3) (Sulfolobus islandicus).